A 284-amino-acid chain; its full sequence is Phosphonates import ATP-binding protein PhnC 2 (284 aa).

The 249-residue stretch at 5 to 253 (IEVRGLSKSF…MLRDLYGTEA (249 aa)) folds into the ABC transporter domain. 38 to 45 (GASGSGKS) is a binding site for ATP.

The protein belongs to the ABC transporter superfamily. Phosphonates importer (TC 3.A.1.9.1) family. The complex is composed of two ATP-binding proteins (PhnC), two transmembrane proteins (PhnE) and a solute-binding protein (PhnD).

It is found in the cell inner membrane. It catalyses the reaction phosphonate(out) + ATP + H2O = phosphonate(in) + ADP + phosphate + H(+). Its function is as follows. Part of the ABC transporter complex PhnCDE involved in phosphonates import. Responsible for energy coupling to the transport system. The protein is Phosphonates import ATP-binding protein PhnC 2 of Cupriavidus necator (strain ATCC 17699 / DSM 428 / KCTC 22496 / NCIMB 10442 / H16 / Stanier 337) (Ralstonia eutropha).